Here is a 288-residue protein sequence, read N- to C-terminus: Bifunctional protein FolD (288 aa).

Residues 166–168 (GAS) and I232 contribute to the NADP(+) site.

The protein belongs to the tetrahydrofolate dehydrogenase/cyclohydrolase family. In terms of assembly, homodimer.

It carries out the reaction (6R)-5,10-methylene-5,6,7,8-tetrahydrofolate + NADP(+) = (6R)-5,10-methenyltetrahydrofolate + NADPH. The enzyme catalyses (6R)-5,10-methenyltetrahydrofolate + H2O = (6R)-10-formyltetrahydrofolate + H(+). It participates in one-carbon metabolism; tetrahydrofolate interconversion. Functionally, catalyzes the oxidation of 5,10-methylenetetrahydrofolate to 5,10-methenyltetrahydrofolate and then the hydrolysis of 5,10-methenyltetrahydrofolate to 10-formyltetrahydrofolate. The protein is Bifunctional protein FolD of Klebsiella pneumoniae (strain 342).